Here is a 341-residue protein sequence, read N- to C-terminus: Ribosomal RNA small subunit methyltransferase H (341 aa).

Residues 47–49 (GGY), Asp-64, Phe-91, Asp-109, and Gln-116 contribute to the S-adenosyl-L-methionine site.

It belongs to the methyltransferase superfamily. RsmH family.

It localises to the cytoplasm. It carries out the reaction cytidine(1402) in 16S rRNA + S-adenosyl-L-methionine = N(4)-methylcytidine(1402) in 16S rRNA + S-adenosyl-L-homocysteine + H(+). In terms of biological role, specifically methylates the N4 position of cytidine in position 1402 (C1402) of 16S rRNA. The sequence is that of Ribosomal RNA small subunit methyltransferase H from Rhizobium leguminosarum bv. trifolii (strain WSM1325).